The sequence spans 240 residues: Protein RoBo-1 (240 aa).

The N-terminal stretch at 1-26 is a signal peptide; that stretch reads MSWFLVLKCLLTVCIISHLSVSSTES. Residue N42 is glycosylated (N-linked (GlcNAc...) asparagine). 5 cysteine pairs are disulfide-bonded: C47-C76, C81-C102, C103-C108, C127-C151, and C144-C171. N-linked (GlcNAc...) asparagine glycosylation is present at N153.

This sequence belongs to the CNF-like-inhibitor family. In terms of processing, N-glycosylated. As to expression, expressed abundantly in bone, including the lengthening growth plate where cartilage is remodeled into bone.

The protein localises to the secreted. Its function is as follows. May play a novel role in the growth or remodeling of bone. The chain is Protein RoBo-1 from Rattus norvegicus (Rat).